A 535-amino-acid chain; its full sequence is MESITLDIELLQLPETSPMSMKSNQDFVKKLFDQWLALPETNRLVTSLVNDAKAGVALNVMCGGGSSGTNSGSNSPLASMFPARNGPPLSPRNSTGSPRIARQRTGLSNLSSPLKVVSDHVKELIPQFYFEDGRPPPNDLKEQCIAKINSLFYGHEDGLQLQEFKLVTTEICKVPSFFSTSIFKKVDTNNTGFVKREDFIDYWVKGNMLTKEITSQVFTILKQPDHNYLVQDDFKPVLQELLATHPGLEFLQGTPEFQDRYAETVIYRIYYYINRSGNGHLTLRELKRGNLVDAMQHADEEEDINKVLRYFSYEHFYVIYCKFWELDTDHDFLIDKENLIRYSNHALTYRIVDRIFSQVPRKFTSKTEGKMGYEDFVYFILAEEDKSSEPSLEYWFKCIDLDANGVLTRNELQFFYEEQLHRMECMAQEAVLFEDILCQLFDMVKPEDEGFICLNDLKGSKLSGNVFNILFNLNKFMAFETRDPFLIRQERANPTWTEWDRFAHREYIRLSMEEDVEDASNGSAEAWDDSLEVPF.

The interval 67 to 104 (SGTNSGSNSPLASMFPARNGPPLSPRNSTGSPRIARQR) is disordered. EF-hand domains follow at residues 174–209 (VPSF…GNML) and 387–422 (SSEP…QLHR). Positions 400, 402, 404, and 411 each coordinate Ca(2+).

As to quaternary structure, PP2A consists of a common heterodimeric core enzyme, composed of a 36 kDa catalytic subunit (subunit C) and a 65 kDa constant regulatory subunit (PR65 or subunit A), that associates with a variety of regulatory subunits. Proteins that associate with the core dimer include three families of regulatory subunits B (the R2/B/PR55/B55, R3/B''/PR72/PR130/PR59 and R5/B'/B56 families) and cell signaling molecules.

Functionally, probable regulatory subunit of type 2A protein phosphatase. This Arabidopsis thaliana (Mouse-ear cress) protein is Probable serine/threonine protein phosphatase 2A regulatory subunit B''delta (B''DELTA).